A 132-amino-acid polypeptide reads, in one-letter code: Small ribosomal subunit protein uS8c (132 aa).

This sequence belongs to the universal ribosomal protein uS8 family. As to quaternary structure, part of the 30S ribosomal subunit.

It is found in the plastid. The protein localises to the chloroplast. In terms of biological role, one of the primary rRNA binding proteins, it binds directly to 16S rRNA central domain where it helps coordinate assembly of the platform of the 30S subunit. This chain is Small ribosomal subunit protein uS8c (rps8), found in Physcomitrium patens (Spreading-leaved earth moss).